Consider the following 1383-residue polypeptide: Periaxin (1383 aa).

A Phosphoserine modification is found at serine 7. The PDZ domain occupies 16-99 (LVEIIVETEA…YKVSFCLKRT (84 aa)). A Nuclear export signal motif is present at residues 70–84 (VFFENFKYEDALRLL). 2 positions are modified to phosphoserine: serine 133 and serine 243. 46 repeat units span residues 432-436 (GPEVK), 440-444 (GPEVK), 448-452 (VPEIK), 456-460 (APEAA), 461-465 (IPDVQ), 466-470 (LPEVQ), 474-478 (MSDMK), 482-486 (IPEMA), 487-491 (VPDVH), 492-496 (LPEVK), 497-501 (LPKVP), 502-506 (EMKVP), 507-511 (EMKLP), 515-519 (EMAVP), 523-527 (LPDIQ), 531-535 (VPEMK), 536-540 (LPDMK), 544-548 (VPEMA), 549-553 (VPDVH), 554-558 (LPDIQ), 562-566 (VPEMK), 567-571 (LPDMK), 575-579 (VPEMA), 580-584 (VPDVR), 585-589 (IPEVQ), 593-597 (VSEVK), 601-605 (IPDMA), 606-610 (VPDVR), 611-615 (LPELQ), 619-623 (MSEVK), 627-631 (IPDMA), 632-636 (VPDVR), 637-641 (LPEVQ), 645-649 (VSELK), 653-657 (VPEMT), 658-662 (MPDIR), 663-667 (LPEVQ), 671-675 (VPDIK), 676-680 (LPEIK), 684-688 (VPEMA), 689-693 (VPDVP), 694-698 (LPELQ), 699-703 (LPKVP), 705-709 (VPDVH), 713-717 (VPEMK), and 718-722 (LPKVP). Positions 432-722 (GPEVKAPKGP…VPEMKLPKVP (291 aa)) are 46 X 5 AA approximate tandem repeats of [LVMGIE]-[PSM]-[EDKA]-[LIVMA]-[AQKHPRT]; that may have a tripeptide spacer of [ALKD]-[IPV]-[KPH]. Phosphoserine is present on residues serine 838, serine 971, serine 1020, serine 1271, serine 1275, serine 1277, serine 1285, serine 1323, and serine 1329. Residues 1251-1383 (KVKSPKLRLP…RIEGTQAAAI (133 aa)) form a disordered region. Residues 1267–1277 (SESASGEGSPS) are compositionally biased toward low complexity. Positions 1346-1355 (GSKDREEGGF) are enriched in basic and acidic residues. Serine 1361 carries the post-translational modification Phosphoserine.

Belongs to the periaxin family. As to quaternary structure, homodimer (via PDZ domain). Interacts with SCN10A. Found in a complex with SCN10A. Interacts with DRP2. Identified in a dystroglycan complex that contains at least PRX, DRP2, UTRN, DMD and DAG1. Detected in a complex composed of at least EZR, AHNAK, PPL and PRX. Identified in a complex with EZR, AHNAK, BFSP1, BFSP2, ANK2, PLEC, VIM and spectrin. Post-translationally, the N-terminus is blocked. In terms of tissue distribution, detected in sciatic nerve and in trigeminal nerve Schwann cells. Detected in myelinating Schwann cells in sciatic nerve (at protein level).

Its subcellular location is the nucleus. The protein localises to the cytoplasm. It is found in the cell membrane. The protein resides in the cell junction. Its function is as follows. Scaffolding protein that functions as part of a dystroglycan complex in Schwann cells, and as part of EZR and AHNAK-containing complexes in eye lens fiber cells. Required for the maintenance of the peripheral myelin sheath that is essential for normal transmission of nerve impulses and normal perception of sensory stimuli. Required for normal transport of MBP mRNA from the perinuclear to the paranodal regions. Required for normal remyelination after nerve injury. Required for normal elongation of Schwann cells and normal length of the internodes between the nodes of Ranvier. The demyelinated nodes of Ranvier permit saltatory transmission of nerve impulses; shorter internodes cause slower transmission of nerve impulses. Required for the formation of appositions between the abaxonal surface of the myelin sheath and the Schwann cell plasma membrane; the Schwann cell cytoplasm is restricted to regions between these appositions. Required for the formation of Cajal bands and of Schmidt-Lanterman incisures that correspond to short, cytoplasm-filled regions on myelinated nerves. Recruits DRP2 to the Schwann cell plasma membrane. Required for normal protein composition of the eye lens fiber cell plasma membrane and normal eye lens fiber cell morphology. This Rattus norvegicus (Rat) protein is Periaxin (Prx).